Here is a 347-residue protein sequence, read N- to C-terminus: Extracellular exo-alpha-(1-&gt;5)-L-arabinofuranosidase ArbA (347 aa).

An N-terminal signal peptide occupies residues methionine 1–alanine 31. Aspartate 35 is a substrate binding site. Aspartate 38 functions as the Proton acceptor in the catalytic mechanism. Substrate is bound by residues aspartate 90–histidine 92, glycine 115–lysine 116, asparagine 155, serine 175, and glutamate 221. Glutamate 221 acts as the Proton donor in catalysis. Histidine 291 contacts Ca(2+). Glutamine 316 lines the substrate pocket.

Belongs to the glycosyl hydrolase 43 family. Homodimer.

Its subcellular location is the secreted. It carries out the reaction Hydrolysis of terminal non-reducing alpha-L-arabinofuranoside residues in alpha-L-arabinosides.. The protein operates within glycan metabolism; L-arabinan degradation. Functionally, involved in the degradation of arabinan and is a key enzyme in the complete degradation of the plant cell wall. Catalyzes the cleavage of the terminal alpha-(1-&gt;5)-arabinofuranosyl bonds of linear arabinan and carboxymethylarabinan to produce almost exclusively arabinotriose. In Cellvibrio japonicus (strain Ueda107) (Pseudomonas fluorescens subsp. cellulosa), this protein is Extracellular exo-alpha-(1-&gt;5)-L-arabinofuranosidase ArbA (arbA).